Here is a 206-residue protein sequence, read N- to C-terminus: Proteasome subunit beta 2 (206 aa).

Residues 1–10 (MLHLKEKLKG) constitute a propeptide, removed in mature form; by autocatalysis. Catalysis depends on threonine 11, which acts as the Nucleophile.

Belongs to the peptidase T1B family. The 20S proteasome core is composed of 14 alpha and 14 beta subunits that assemble into four stacked heptameric rings, resulting in a barrel-shaped structure. The two inner rings, each composed of seven catalytic beta subunits, are sandwiched by two outer rings, each composed of seven alpha subunits. The catalytic chamber with the active sites is on the inside of the barrel. Has a gated structure, the ends of the cylinder being occluded by the N-termini of the alpha-subunits. Is capped at one or both ends by the proteasome regulatory ATPase, PAN.

Its subcellular location is the cytoplasm. The catalysed reaction is Cleavage of peptide bonds with very broad specificity.. The formation of the proteasomal ATPase PAN-20S proteasome complex, via the docking of the C-termini of PAN into the intersubunit pockets in the alpha-rings, triggers opening of the gate for substrate entry. Interconversion between the open-gate and close-gate conformations leads to a dynamic regulation of the 20S proteasome proteolysis activity. Its function is as follows. Component of the proteasome core, a large protease complex with broad specificity involved in protein degradation. This chain is Proteasome subunit beta 2, found in Pyrococcus furiosus (strain ATCC 43587 / DSM 3638 / JCM 8422 / Vc1).